A 206-amino-acid polypeptide reads, in one-letter code: LOB domain-containing protein 35 (206 aa).

The LOB domain maps to 4-105; it reads TCCSACKVMK…EQINSAKNEL (102 aa). Residues 184 to 206 form a disordered region; it reads ASTSGGTSATQKTLPFPQNHNQP.

The protein belongs to the LOB domain-containing protein family.

This chain is LOB domain-containing protein 35 (LBD35), found in Arabidopsis thaliana (Mouse-ear cress).